The following is an 89-amino-acid chain: Small ribosomal subunit protein uS15 (89 aa).

The protein belongs to the universal ribosomal protein uS15 family. As to quaternary structure, part of the 30S ribosomal subunit. Forms a bridge to the 50S subunit in the 70S ribosome, contacting the 23S rRNA.

In terms of biological role, one of the primary rRNA binding proteins, it binds directly to 16S rRNA where it helps nucleate assembly of the platform of the 30S subunit by binding and bridging several RNA helices of the 16S rRNA. Functionally, forms an intersubunit bridge (bridge B4) with the 23S rRNA of the 50S subunit in the ribosome. The chain is Small ribosomal subunit protein uS15 from Nitratidesulfovibrio vulgaris (strain DSM 19637 / Miyazaki F) (Desulfovibrio vulgaris).